The following is a 310-amino-acid chain: 2-methoxy-6-polyprenyl-1,4-benzoquinol methylase, mitochondrial (310 aa).

A mitochondrion-targeting transit peptide spans 1–6; sequence MAHMRS. Residues Thr99, Asp154, and 182–183 each bind S-adenosyl-L-methionine; that span reads DA.

It belongs to the class I-like SAM-binding methyltransferase superfamily. MenG/UbiE family. As to quaternary structure, component of a multi-subunit COQ enzyme complex, composed of at least coq3, coq4, coq5, coq6, coq7 and coq9.

The protein resides in the mitochondrion inner membrane. It carries out the reaction a 2-methoxy-6-(all-trans-polyprenyl)benzene-1,4-diol + S-adenosyl-L-methionine = a 5-methoxy-2-methyl-3-(all-trans-polyprenyl)benzene-1,4-diol + S-adenosyl-L-homocysteine + H(+). It participates in cofactor biosynthesis; ubiquinone biosynthesis. In terms of biological role, methyltransferase required for the conversion of 2-polyprenyl-6-methoxy-1,4-benzoquinol (DDMQH2) to 2-polyprenyl-3-methyl-6-methoxy-1,4-benzoquinol (DMQH2). This Xenopus laevis (African clawed frog) protein is 2-methoxy-6-polyprenyl-1,4-benzoquinol methylase, mitochondrial.